The chain runs to 644 residues: Transcription factor cep-1 (644 aa).

A DNA-binding region spans residues 223 to 418 (EKWMEIDVLK…NFCEREDAKQ (196 aa)). Cys307, His310, Cys361, and Cys365 together coordinate Zn(2+). The segment at 528-555 (TNYSFRTLTLSTAEYTKVVEFLAREAKV) is required for tertiary structure stability of the protein.

This sequence belongs to the p53 family. Homodimer. Interacts (via C-terminus domain) with prmt-5; not methylated by prmt-5. Interacts with cbp-1 (via HAT domain); cep-1 transcriptional activity may be inhibited by interaction with methylated cbp-1. Component of a complex that contains prmt-5 and cbp-1. Interacts with ape-1; the interaction inhibits pro-apoptotic activity of cep-1. Zn(2+) is required as a cofactor. Phosphorylated in response to IR-induced DNA damage which is thought to be mediated by akt-1. In terms of tissue distribution, expressed in pharyngeal muscle and neurons.

It localises to the nucleus. Transcriptional activator that binds the same DNA consensus sequence as p53. Has a role in normal development to ensure proper meiotic chromosome segregation. Promotes apoptosis under conditions of cellular and genotoxic stress in response to DNA damage, hypoxia, or starvation. Regulates germline apoptosis in response to DNA damage. Its pro-apoptotic activity is inhibited when bound to ape-1 in vitro. Plays a role in cell cycle arrest in the germline in response to DNA damage by UV-C light. However, not required for survival in response to DNA damage induced by UV-C light, indicating that it is unlikely to be involved in DNA repair. Required for induction of ced-13 in response to DNA damage. Regulates DNA damage-induced apoptosis by inducing transcription of the programmed cell death activator egl-1. Regulates germline proliferation by activating phg-1. Modulates lifespan. In Caenorhabditis elegans, this protein is Transcription factor cep-1.